A 330-amino-acid chain; its full sequence is tRNA-modifying protein YgfZ (330 aa).

Folate is bound by residues Trp28 and Trp190.

Belongs to the tRNA-modifying YgfZ family.

It localises to the cytoplasm. In terms of biological role, folate-binding protein involved in regulating the level of ATP-DnaA and in the modification of some tRNAs. It is probably a key factor in regulatory networks that act via tRNA modification, such as initiation of chromosomal replication. The protein is tRNA-modifying protein YgfZ of Serratia proteamaculans (strain 568).